The following is a 166-amino-acid chain: MHENQQPQTEAFELSAAEREAIEHEKHHYEDPRAASIEALKIVQKQRGWVPDGAIYAIADVLGIPASDVEGVATFYSQIFRQPVGRHVIRYCDSVVCHITGYQGIQAALEKNLNIKPGQTTFDGRFTLLPTCCLGNCDKGPNMMIDEDTHSHLTPEAIPELLERYK.

The [2Fe-2S] cluster site is built by Cys92, Cys97, Cys133, and Cys137.

This sequence belongs to the complex I 24 kDa subunit family. As to quaternary structure, composed of 13 different subunits. Subunits NuoCD, E, F, and G constitute the peripheral sector of the complex. [2Fe-2S] cluster serves as cofactor.

The catalysed reaction is a quinone + NADH + 5 H(+)(in) = a quinol + NAD(+) + 4 H(+)(out). Its function is as follows. NDH-1 shuttles electrons from NADH, via FMN and iron-sulfur (Fe-S) centers, to quinones in the respiratory chain. The immediate electron acceptor for the enzyme in this species is believed to be ubiquinone. Couples the redox reaction to proton translocation (for every two electrons transferred, four hydrogen ions are translocated across the cytoplasmic membrane), and thus conserves the redox energy in a proton gradient. In Salmonella typhi, this protein is NADH-quinone oxidoreductase subunit E (nuoE).